Consider the following 183-residue polypeptide: Large ribosomal subunit protein uL6 (183 aa).

This sequence belongs to the universal ribosomal protein uL6 family. Part of the 50S ribosomal subunit.

In terms of biological role, this protein binds to the 23S rRNA, and is important in its secondary structure. It is located near the subunit interface in the base of the L7/L12 stalk, and near the tRNA binding site of the peptidyltransferase center. The protein is Large ribosomal subunit protein uL6 of Moorella thermoacetica (strain ATCC 39073 / JCM 9320).